The sequence spans 1012 residues: DNA polymerase gamma (1012 aa).

It belongs to the DNA polymerase type-A family. Requires Mg(2+) as cofactor.

It is found in the mitochondrion. The enzyme catalyses DNA(n) + a 2'-deoxyribonucleoside 5'-triphosphate = DNA(n+1) + diphosphate. Functionally, involved in the replication of mitochondrial DNA. The protein is DNA polymerase gamma (MIP1) of Komagataella pastoris (Yeast).